A 1184-amino-acid polypeptide reads, in one-letter code: uncharacterized protein (1184 aa).

2 disordered regions span residues 115–152 (ETSSQPSQEVYHPHAGKAAQSAHVMNSTESRPSSAHVS) and 397–426 (TYKPKSSVNGSVYRSKSVKSTTSHNKVPER). Composition is skewed to polar residues over residues 137 to 152 (HVMNSTESRPSSAHVS) and 397 to 421 (TYKPKSSVNGSVYRSKSVKSTTSHN). Ser-686 carries the post-translational modification Phosphoserine. 4 stretches are compositionally biased toward basic and acidic residues: residues 705-767 (LSER…ESAH), 783-792 (FEHETEPSHY), 849-863 (SHAHDNAVNEKRDLG), and 891-902 (YLHDEKTRDTLT). Disordered regions lie at residues 705 to 870 (LSER…FGDV) and 890 to 1017 (DYLH…SSPK). The residue at position 905 (Ser-905) is a Phosphoserine. Residues 920–932 (EDHPHASEAERAH) are compositionally biased toward basic and acidic residues. Positions 941 to 950 (SSESSPESQS) are enriched in low complexity. The segment covering 999–1011 (PRERLDDNAKEIL) has biased composition (basic and acidic residues). Ser-1018 carries the post-translational modification Phosphoserine. 2 disordered regions span residues 1029 to 1107 (NRKD…IGTQ) and 1135 to 1154 (DVDNVVSGHSNVNGVSKSRP). Residues 1032–1045 (DKAAVKRMLEEDSS) show a composition bias toward basic and acidic residues. Positions 1073-1107 (PAVNNSTKPVAVTSKNGHSRNGSHAAHSNNVIGTQ) are enriched in polar residues. Over residues 1138–1150 (NVVSGHSNVNGVS) the composition is skewed to low complexity.

It localises to the cytoplasm. This is an uncharacterized protein from Schizosaccharomyces pombe (strain 972 / ATCC 24843) (Fission yeast).